Reading from the N-terminus, the 184-residue chain is Photosystem I assembly protein Ycf4 (184 aa).

Helical transmembrane passes span 19–39 and 57–77; these read ISNF…LLVG and IIFF…LFIS.

This sequence belongs to the Ycf4 family.

The protein localises to the plastid. Its subcellular location is the chloroplast thylakoid membrane. Its function is as follows. Seems to be required for the assembly of the photosystem I complex. The polypeptide is Photosystem I assembly protein Ycf4 (Drimys granadensis).